Here is a 379-residue protein sequence, read N- to C-terminus: Homoserine O-acetyltransferase (379 aa).

Residues 52–356 (NVVVVLHALT…VYGHDGFLVE (305 aa)) form the AB hydrolase-1 domain. S157 functions as the Nucleophile in the catalytic mechanism. Residue R227 participates in substrate binding. Active-site residues include D320 and H350. Position 351 (D351) interacts with substrate.

The protein belongs to the AB hydrolase superfamily. MetX family. Homodimer.

It localises to the cytoplasm. It catalyses the reaction L-homoserine + acetyl-CoA = O-acetyl-L-homoserine + CoA. It functions in the pathway amino-acid biosynthesis; L-methionine biosynthesis via de novo pathway; O-acetyl-L-homoserine from L-homoserine: step 1/1. Functionally, transfers an acetyl group from acetyl-CoA to L-homoserine, forming acetyl-L-homoserine. This Mycobacterium tuberculosis (strain CDC 1551 / Oshkosh) protein is Homoserine O-acetyltransferase.